Consider the following 443-residue polypeptide: Methylenetetrahydrofolate--tRNA-(uracil-5-)-methyltransferase TrmFO (443 aa).

8–13 contacts FAD; sequence GAGLAG.

This sequence belongs to the MnmG family. TrmFO subfamily. FAD serves as cofactor.

The protein localises to the cytoplasm. It catalyses the reaction uridine(54) in tRNA + (6R)-5,10-methylene-5,6,7,8-tetrahydrofolate + NADH + H(+) = 5-methyluridine(54) in tRNA + (6S)-5,6,7,8-tetrahydrofolate + NAD(+). The enzyme catalyses uridine(54) in tRNA + (6R)-5,10-methylene-5,6,7,8-tetrahydrofolate + NADPH + H(+) = 5-methyluridine(54) in tRNA + (6S)-5,6,7,8-tetrahydrofolate + NADP(+). In terms of biological role, catalyzes the folate-dependent formation of 5-methyl-uridine at position 54 (M-5-U54) in all tRNAs. The sequence is that of Methylenetetrahydrofolate--tRNA-(uracil-5-)-methyltransferase TrmFO from Thermus thermophilus (strain ATCC BAA-163 / DSM 7039 / HB27).